Here is a 434-residue protein sequence, read N- to C-terminus: [Arg8]-vasotocin receptor (434 aa).

The Extracellular segment spans residues 1–27 (MGRIANQTTASNDTDPFGRNEEVAKME). N-linked (GlcNAc...) asparagine glycosylation is found at Asn6 and Asn12. A helical membrane pass occupies residues 28–48 (ITVLSVTFFVAVIGNLSVLLA). The Cytoplasmic portion of the chain corresponds to 49 to 67 (MHNTKKKSSRMHLFIKHLS). The chain crosses the membrane as a helical span at residues 68-88 (LADMVVAFFQVLPQLCWEITF). Residues 89–98 (RFYGPDFLCR) are Extracellular-facing. A disulfide bridge links Cys97 with Cys176. Residues 99–119 (IVKHLQVLGMFASTYMMVMMT) traverse the membrane as a helical segment. The Cytoplasmic portion of the chain corresponds to 120–141 (LDRYIAICHPLKTLQQPTQRAY). A helical transmembrane segment spans residues 142-162 (IMIGSTWLCSLLLSTPQYFIF). The Extracellular segment spans residues 163 to 191 (SLSEIQNGSYVYDCWGHFIEPWGIRAYIT). Residues 192 to 212 (WITVGIFLIPVIILMICYGFI) form a helical membrane-spanning segment. At 213–257 (CHSIWKNIKCKTMRGTRNTKDGMIGKVSVSSVTIISRAKLRTVKM) the chain is on the cytoplasmic side. Residues 258-278 (TLVIVLAYIVCWAPFFIVQMW) traverse the membrane as a helical segment. Residues 279–295 (SVWDENFSWDDSENAAV) are Extracellular-facing. Residues 296 to 316 (TLSALLASLNSCCNPWIYMLF) form a helical membrane-spanning segment. Topologically, residues 317 to 434 (SGHLLYDFLR…KSSQCMSKES (118 aa)) are cytoplasmic.

This sequence belongs to the G-protein coupled receptor 1 family. Vasopressin/oxytocin receptor subfamily. In terms of tissue distribution, expressed in pituitary, liver, gills, swim bladder and lateral line.

The protein resides in the cell membrane. Binds to vasotocin. Produces an induction of membrane chloride currents indicating that it is coupled to the inositol phosphate/calcium pathway. The chain is [Arg8]-vasotocin receptor from Catostomus commersonii (White sucker).